The following is a 170-amino-acid chain: Small ribosomal subunit protein bS18c (170 aa).

Disordered regions lie at residues 1–60 and 149–170; these read MYTS…GPGD and NRNL…SSDC. 7 consecutive repeats follow at residues 4–10, 11–17, 18–24, 25–31, 32–38, 39–45, and 46–52; these read SKQPFLK, SKQPFSK, SEQPFSK, SEQPFRK, SKQTFRK, FKQPFRK, and SKQPFRR. Residues 4 to 52 are 7 X 7 AA tandem repeats; the sequence is SKQPFLKSKQPFSKSEQPFSKSEQPFRKSKQTFRKFKQPFRKSKQPFRR. Residues 13 to 26 are compositionally biased toward polar residues; that stretch reads QPFSKSEQPFSKSE. The segment covering 30–55 has biased composition (basic residues); it reads RKSKQTFRKFKQPFRKSKQPFRRRPR.

Belongs to the bacterial ribosomal protein bS18 family. Part of the 30S ribosomal subunit.

Its subcellular location is the plastid. It is found in the chloroplast. This is Small ribosomal subunit protein bS18c (rps18) from Secale cereale (Rye).